The following is a 166-amino-acid chain: UPF0254 protein Mevan_0254 (166 aa).

This sequence belongs to the UPF0254 family.

The polypeptide is UPF0254 protein Mevan_0254 (Methanococcus vannielii (strain ATCC 35089 / DSM 1224 / JCM 13029 / OCM 148 / SB)).